We begin with the raw amino-acid sequence, 448 residues long: Probable D-serine dehydratase (448 aa).

K119 is subject to N6-(pyridoxal phosphate)lysine.

The protein belongs to the serine/threonine dehydratase family. DsdA subfamily. Pyridoxal 5'-phosphate serves as cofactor.

The enzyme catalyses D-serine = pyruvate + NH4(+). This chain is Probable D-serine dehydratase, found in Pseudomonas aeruginosa (strain ATCC 15692 / DSM 22644 / CIP 104116 / JCM 14847 / LMG 12228 / 1C / PRS 101 / PAO1).